The sequence spans 272 residues: HMP-PP phosphatase (272 aa).

Asp-8 serves as the catalytic Nucleophile. 3 residues coordinate Mg(2+): Asp-8, Asp-10, and Asp-212.

It belongs to the HAD-like hydrolase superfamily. Cof family. Requires Mg(2+) as cofactor.

It catalyses the reaction 4-amino-2-methyl-5-(diphosphooxymethyl)pyrimidine + H2O = 4-amino-2-methyl-5-(phosphooxymethyl)pyrimidine + phosphate + H(+). In terms of biological role, catalyzes the hydrolysis of 4-amino-2-methyl-5-hydroxymethylpyrimidine pyrophosphate (HMP-PP) to 4-amino-2-methyl-5-hydroxymethylpyrimidine phosphate (HMP-P). This is HMP-PP phosphatase from Escherichia coli O81 (strain ED1a).